A 456-amino-acid chain; its full sequence is MSRISRLGACAEELAIAATTIAAFCKHHSNSGLPGDSIPPDAPQKVLQAKQSVITNSQKLEVLLAEPADFIQRLARENQLLACLQWLGEFQVLACIPIVDSVHYSDVADLACVPVDQLRRIARMTITAGFLQEPKPGYVAHSGLSAPFVKQPVLLDAAMFLSETLAPSALHMSLATKRHGRTHQTDQCAFNTAFNTKASFADSLGRRPRLQRQWPSFSRYAIADDEAGVEDVMTRLDWLSLGEATVVDVCAKTASLATALTSKYPSLRFVVQSEEQCQNHTWSRSLSATKLHNGLSTPPESDTGPAARAAKASERLELQQRALGSPQNVTNAAVYILRLGTASPFTSWHKLRAQATAELSAHADILRKEHGSRLILVTRTLPKPGEVETTVEAMARFRDLTLMQLANVRELETSEVVELLNSVHIEGGCLVLTNELRTRNSGMIAFEATYQPQLLG.

Positions 74-143 (LARENQLLAC…PKPGYVAHSG (70 aa)) constitute an HTH iclR-type domain. The H-T-H motif DNA-binding region spans 104–123 (YSDVADLACVPVDQLRRIAR). The span at 290–300 (KLHNGLSTPPE) shows a compositional bias: polar residues. The tract at residues 290 to 314 (KLHNGLSTPPESDTGPAARAAKASE) is disordered.

The protein localises to the nucleus. Functionally, transcription coactivator involved in regulation of the dothistromin biosynthesis gene cluster with aflR. This is Dothistromin biosynthesis regulatory protein aflJ from Dothistroma septosporum (strain NZE10 / CBS 128990) (Red band needle blight fungus).